The following is a 356-amino-acid chain: Dual-specificity RNA methyltransferase RlmN (356 aa).

The Proton acceptor role is filled by Glu92. The Radical SAM core domain maps to Glu98 to Asp334. A disulfide bridge links Cys105 with Cys337. Residues Cys112, Cys116, and Cys119 each coordinate [4Fe-4S] cluster. S-adenosyl-L-methionine is bound by residues Gly162–Glu163, Ser194, Ser216–His218, and Asn294. Residue Cys337 is the S-methylcysteine intermediate of the active site.

Belongs to the radical SAM superfamily. RlmN family. [4Fe-4S] cluster serves as cofactor.

The protein resides in the cytoplasm. The catalysed reaction is adenosine(2503) in 23S rRNA + 2 reduced [2Fe-2S]-[ferredoxin] + 2 S-adenosyl-L-methionine = 2-methyladenosine(2503) in 23S rRNA + 5'-deoxyadenosine + L-methionine + 2 oxidized [2Fe-2S]-[ferredoxin] + S-adenosyl-L-homocysteine. It carries out the reaction adenosine(37) in tRNA + 2 reduced [2Fe-2S]-[ferredoxin] + 2 S-adenosyl-L-methionine = 2-methyladenosine(37) in tRNA + 5'-deoxyadenosine + L-methionine + 2 oxidized [2Fe-2S]-[ferredoxin] + S-adenosyl-L-homocysteine. Specifically methylates position 2 of adenine 2503 in 23S rRNA and position 2 of adenine 37 in tRNAs. m2A2503 modification seems to play a crucial role in the proofreading step occurring at the peptidyl transferase center and thus would serve to optimize ribosomal fidelity. The sequence is that of Dual-specificity RNA methyltransferase RlmN from Vesicomyosocius okutanii subsp. Calyptogena okutanii (strain HA).